Here is a 224-residue protein sequence, read N- to C-terminus: Metalloproteinase inhibitor 4 (224 aa).

Residues 1–29 (MPGSPRPAPSWVLLLRLLALLRPPGLGEA) form the signal peptide. Residue C30 participates in Zn(2+) binding. Involved in metalloproteinase-binding regions lie at residues 30-33 (CSCA) and 99-100 (SS). Disulfide bonds link C30-C102, C32-C131, C42-C156, C158-C205, C163-C168, and C176-C197. An NTR domain is found at 30 to 156 (CSCAPAHPQQ…SLNHHYHLNC (127 aa)).

Belongs to the protease inhibitor I35 (TIMP) family. Abundant in heart and present at low levels in many other tissues.

Its subcellular location is the secreted. Complexes with metalloproteinases (such as collagenases) and irreversibly inactivates them by binding to their catalytic zinc cofactor. Known to act on MMP-1, MMP-2, MMP-3, MMP-7 and MMP-9. This is Metalloproteinase inhibitor 4 (TIMP4) from Homo sapiens (Human).